The primary structure comprises 129 residues: Large ribosomal subunit protein bL12 (129 aa).

The protein belongs to the bacterial ribosomal protein bL12 family. In terms of assembly, homodimer. Part of the ribosomal stalk of the 50S ribosomal subunit. Forms a multimeric L10(L12)X complex, where L10 forms an elongated spine to which 2 to 4 L12 dimers bind in a sequential fashion. Binds GTP-bound translation factors.

In terms of biological role, forms part of the ribosomal stalk which helps the ribosome interact with GTP-bound translation factors. Is thus essential for accurate translation. The sequence is that of Large ribosomal subunit protein bL12 from Treponema pallidum (strain Nichols).